The primary structure comprises 360 residues: D-alanine--D-alanine ligase (360 aa).

Residues 134–343 (KILAQRVGVP…YTELITRLIE (210 aa)) form the ATP-grasp domain. 169–224 (AEKLGRDMFVKPSNQGSSVGVSHVTNADEYAAALKEAFKYDDKVLVEETVPGTEVE) lines the ATP pocket. 3 residues coordinate Mg(2+): D297, E310, and N312.

The protein belongs to the D-alanine--D-alanine ligase family. Mg(2+) serves as cofactor. Requires Mn(2+) as cofactor.

It localises to the cytoplasm. It catalyses the reaction 2 D-alanine + ATP = D-alanyl-D-alanine + ADP + phosphate + H(+). It functions in the pathway cell wall biogenesis; peptidoglycan biosynthesis. Functionally, cell wall formation. This chain is D-alanine--D-alanine ligase, found in Lactobacillus helveticus (strain DPC 4571).